The primary structure comprises 405 residues: Homocitrate synthase AksA (405 aa).

The 252-residue stretch at 23 to 274 folds into the Pyruvate carboxyltransferase domain; sequence IEICDVTLRD…IERYDTTKLN (252 aa).

Belongs to the alpha-IPM synthase/homocitrate synthase family.

The enzyme catalyses acetyl-CoA + 2-oxoglutarate + H2O = (2R)-homocitrate + CoA + H(+). It carries out the reaction 2-oxoadipate + acetyl-CoA + H2O = (R)-dihomocitrate + CoA + H(+). It catalyses the reaction 2-oxoheptanedioate + acetyl-CoA + H2O = (R)-trihomocitrate + CoA + H(+). Its pathway is organic acid metabolism; 2-oxosuberate biosynthesis. Catalyzes the condensation of alpha-ketoglutarate and acetyl-CoA to form (R)-homocitrate. Can also catalyze the condensation of alpha-ketoadipate with acetyl-CoA to form (R)-homo(2)citrate, and the condensation of alpha-ketopimelate with acetyl-CoA to form (R)-homo(3)citrate. These reactions are part of the biosynthesis pathway of coenzyme B and biotin. This Methanosarcina mazei (strain ATCC BAA-159 / DSM 3647 / Goe1 / Go1 / JCM 11833 / OCM 88) (Methanosarcina frisia) protein is Homocitrate synthase AksA (aksA).